Here is a 501-residue protein sequence, read N- to C-terminus: ATP synthase subunit alpha (501 aa).

169-176 lines the ATP pocket; that stretch reads GDRQTGKT.

This sequence belongs to the ATPase alpha/beta chains family. F-type ATPases have 2 components, CF(1) - the catalytic core - and CF(0) - the membrane proton channel. CF(1) has five subunits: alpha(3), beta(3), gamma(1), delta(1), epsilon(1). CF(0) has three main subunits: a(1), b(2) and c(9-12). The alpha and beta chains form an alternating ring which encloses part of the gamma chain. CF(1) is attached to CF(0) by a central stalk formed by the gamma and epsilon chains, while a peripheral stalk is formed by the delta and b chains.

It is found in the cell membrane. It carries out the reaction ATP + H2O + 4 H(+)(in) = ADP + phosphate + 5 H(+)(out). Functionally, produces ATP from ADP in the presence of a proton gradient across the membrane. The alpha chain is a regulatory subunit. The protein is ATP synthase subunit alpha of Streptococcus pneumoniae serotype 4 (strain ATCC BAA-334 / TIGR4).